The sequence spans 339 residues: Anthranilate phosphoribosyltransferase (339 aa).

5-phospho-alpha-D-ribose 1-diphosphate contacts are provided by residues glycine 82, 85-86 (GD), threonine 90, 92-95 (NIST), 110-118 (KHGNRSASG), and serine 122. Glycine 82 is an anthranilate binding site. Serine 94 serves as a coordination point for Mg(2+). Asparagine 113 is a binding site for anthranilate. Arginine 168 provides a ligand contact to anthranilate. Aspartate 226 and glutamate 227 together coordinate Mg(2+).

The protein belongs to the anthranilate phosphoribosyltransferase family. Homodimer. Mg(2+) serves as cofactor.

It catalyses the reaction N-(5-phospho-beta-D-ribosyl)anthranilate + diphosphate = 5-phospho-alpha-D-ribose 1-diphosphate + anthranilate. The protein operates within amino-acid biosynthesis; L-tryptophan biosynthesis; L-tryptophan from chorismate: step 2/5. In terms of biological role, catalyzes the transfer of the phosphoribosyl group of 5-phosphorylribose-1-pyrophosphate (PRPP) to anthranilate to yield N-(5'-phosphoribosyl)-anthranilate (PRA). This chain is Anthranilate phosphoribosyltransferase, found in Methanosphaerula palustris (strain ATCC BAA-1556 / DSM 19958 / E1-9c).